The chain runs to 238 residues: Flagellar L-ring protein (238 aa).

An N-terminal signal peptide occupies residues Met-1 to Gly-16. A lipid anchor (N-palmitoyl cysteine) is attached at Cys-17. The S-diacylglycerol cysteine moiety is linked to residue Cys-17.

The protein belongs to the FlgH family. As to quaternary structure, the basal body constitutes a major portion of the flagellar organelle and consists of four rings (L,P,S, and M) mounted on a central rod.

Its subcellular location is the cell outer membrane. The protein resides in the bacterial flagellum basal body. Its function is as follows. Assembles around the rod to form the L-ring and probably protects the motor/basal body from shearing forces during rotation. The sequence is that of Flagellar L-ring protein from Brucella melitensis biotype 2 (strain ATCC 23457).